The following is a 603-amino-acid chain: Arginine--tRNA ligase (603 aa).

The 'HIGH' region signature appears at 143 to 153 (PNIAKEMHVGH).

Belongs to the class-I aminoacyl-tRNA synthetase family. In terms of assembly, monomer.

Its subcellular location is the cytoplasm. The catalysed reaction is tRNA(Arg) + L-arginine + ATP = L-arginyl-tRNA(Arg) + AMP + diphosphate. This is Arginine--tRNA ligase from Prochlorococcus marinus (strain MIT 9303).